The chain runs to 316 residues: tRNA dimethylallyltransferase (316 aa).

An ATP-binding site is contributed by 17 to 24 (GPTASGKT). 19-24 (TASGKT) contacts substrate. Interaction with substrate tRNA regions lie at residues 42-45 (DSAL), 166-170 (QRLSR), 247-252 (RCVGYR), and 280-287 (KRQITWLR).

The protein belongs to the IPP transferase family. Monomer. It depends on Mg(2+) as a cofactor.

It catalyses the reaction adenosine(37) in tRNA + dimethylallyl diphosphate = N(6)-dimethylallyladenosine(37) in tRNA + diphosphate. Functionally, catalyzes the transfer of a dimethylallyl group onto the adenine at position 37 in tRNAs that read codons beginning with uridine, leading to the formation of N6-(dimethylallyl)adenosine (i(6)A). The sequence is that of tRNA dimethylallyltransferase from Shigella flexneri serotype 5b (strain 8401).